Here is a 253-residue protein sequence, read N- to C-terminus: Ribosomal RNA small subunit methyltransferase A (253 aa).

S-adenosyl-L-methionine-binding residues include His-12, Leu-14, Gly-39, Glu-60, Asp-81, and Asn-104.

This sequence belongs to the class I-like SAM-binding methyltransferase superfamily. rRNA adenine N(6)-methyltransferase family. RsmA subfamily.

Its subcellular location is the cytoplasm. It catalyses the reaction adenosine(1518)/adenosine(1519) in 16S rRNA + 4 S-adenosyl-L-methionine = N(6)-dimethyladenosine(1518)/N(6)-dimethyladenosine(1519) in 16S rRNA + 4 S-adenosyl-L-homocysteine + 4 H(+). Its function is as follows. Specifically dimethylates two adjacent adenosines (A1518 and A1519) in the loop of a conserved hairpin near the 3'-end of 16S rRNA in the 30S particle. May play a critical role in biogenesis of 30S subunits. The polypeptide is Ribosomal RNA small subunit methyltransferase A (Paracidovorax citrulli (strain AAC00-1) (Acidovorax citrulli)).